Consider the following 140-residue polypeptide: Organic hydroperoxide resistance protein-like (140 aa).

This sequence belongs to the OsmC/Ohr family.

This Staphylococcus aureus (strain MSSA476) protein is Organic hydroperoxide resistance protein-like.